Consider the following 353-residue polypeptide: Regulatory protein E2 (353 aa).

The transactivation domain stretch occupies residues 1-200 (MEEISARLNA…QVIVCPTSIS (200 aa)). The segment covering 206–215 (TTETADIQTD) has biased composition (polar residues). The disordered stretch occupies residues 206–234 (TTETADIQTDNDNRPPQAAAKRRRPADTT). Residues 273–353 (VAPIVHLKGE…VQISTGFMTL (81 aa)) form a DNA-binding domain region. Residue lysine 280 forms a Glycyl lysine isopeptide (Lys-Gly) (interchain with G-Cter in SUMO) linkage.

Belongs to the papillomaviridae E2 protein family. In terms of assembly, binds DNA as homodimer. Interacts with protein E1; this interaction greatly increases E1 DNA-binding activity. Interacts with protein L1; this interaction enhances E2-dependent replication and transcription activation. Interacts with protein L2; this interaction inhibits E2 transcriptional activity but not DNA replication function E2. Interacts with protein E7; this interaction inhibits E7 oncogenic activity. Interacts with host TAF1; this interaction modulates E2-dependent transcriptional regulation. Interacts with host BRD4; this interaction mediates E2 transcriptional activation function. Additionally, the interaction with host BRD4 on mitotic chromosomes mediates tethering of the viral genome. Interacts with host TOPBP1; this interaction is required for optimal viral DNA replication. Post-translationally, phosphorylated. In terms of processing, sumoylation plays a regulatory role in E2 transcriptional activity.

The protein resides in the host nucleus. Plays a role in the initiation of viral DNA replication. A dimer of E2 interacts with a dimer of E1 in order to improve specificity of E1 DNA binding activity. Once the complex recognizes and binds DNA at specific sites, the E2 dimer is removed from DNA. E2 also regulates viral transcription through binding to the E2RE response element (5'-ACCNNNNNNGGT-3') present in multiple copies in the regulatory regions of the viral genome. Activates or represses transcription depending on E2RE's position with regards to proximal promoter elements including the TATA-box. Repression occurs by sterically hindering the assembly of the transcription initiation complex. The protein is Regulatory protein E2 of Homo sapiens (Human).